Reading from the N-terminus, the 516-residue chain is Endoglucanase 17 (516 aa).

The N-terminal stretch at methionine 1–glycine 29 is a signal peptide. Residue aspartate 105 is the Nucleophile of the active site. Active-site residues include histidine 433, aspartate 484, and glutamate 493.

It belongs to the glycosyl hydrolase 9 (cellulase E) family.

Its subcellular location is the secreted. It catalyses the reaction Endohydrolysis of (1-&gt;4)-beta-D-glucosidic linkages in cellulose, lichenin and cereal beta-D-glucans.. The protein is Endoglucanase 17 of Arabidopsis thaliana (Mouse-ear cress).